The primary structure comprises 425 residues: 5-aminovalerate aminotransferase DavT (425 aa).

Residues 112-113 (GS), Y139, and 240-243 (DEVQ) contribute to the pyridoxal 5'-phosphate site. At K269 the chain carries N6-(pyridoxal phosphate)lysine. Residue T298 participates in pyridoxal 5'-phosphate binding.

Belongs to the class-III pyridoxal-phosphate-dependent aminotransferase family. Pyridoxal 5'-phosphate is required as a cofactor.

The enzyme catalyses 5-aminopentanoate + 2-oxoglutarate = 5-oxopentanoate + L-glutamate. Its function is as follows. Catalyzes the conversion of 5-aminovalerate to 5-oxopentanoate. This Pseudomonas putida (strain ATCC 47054 / DSM 6125 / CFBP 8728 / NCIMB 11950 / KT2440) protein is 5-aminovalerate aminotransferase DavT (davT).